The chain runs to 267 residues: 4-hydroxy-tetrahydrodipicolinate reductase (267 aa).

NAD(+)-binding positions include 12-17, 100-102, and 126-129; these read GPRGRM, GTT, and APNF. Residue His-156 is the Proton donor/acceptor of the active site. His-157 provides a ligand contact to (S)-2,3,4,5-tetrahydrodipicolinate. Lys-160 (proton donor) is an active-site residue. Position 166-167 (166-167) interacts with (S)-2,3,4,5-tetrahydrodipicolinate; that stretch reads GT.

Belongs to the DapB family.

It is found in the cytoplasm. The enzyme catalyses (S)-2,3,4,5-tetrahydrodipicolinate + NAD(+) + H2O = (2S,4S)-4-hydroxy-2,3,4,5-tetrahydrodipicolinate + NADH + H(+). The catalysed reaction is (S)-2,3,4,5-tetrahydrodipicolinate + NADP(+) + H2O = (2S,4S)-4-hydroxy-2,3,4,5-tetrahydrodipicolinate + NADPH + H(+). It functions in the pathway amino-acid biosynthesis; L-lysine biosynthesis via DAP pathway; (S)-tetrahydrodipicolinate from L-aspartate: step 4/4. Functionally, catalyzes the conversion of 4-hydroxy-tetrahydrodipicolinate (HTPA) to tetrahydrodipicolinate. The sequence is that of 4-hydroxy-tetrahydrodipicolinate reductase from Bacillus velezensis (strain DSM 23117 / BGSC 10A6 / LMG 26770 / FZB42) (Bacillus amyloliquefaciens subsp. plantarum).